Reading from the N-terminus, the 21-residue chain is Buforin-2 (21 aa).

Position 21 is an N6-(2-hydroxyisobutyryl)lysine; alternate (K21).

The protein belongs to the histone H2A family. In terms of tissue distribution, expressed by the skin glands.

The protein resides in the secreted. Its function is as follows. Antimicrobial peptide with potent activity against some Gram-positive and Gram-negative bacteria. Does not permeabilize membrane, but internalizes into bacterial cells and alter specific gene expression involved in bacterial resistance mechanisms. Has the ability to agglutinate E.coli, and lipid vesicles. Shows a weak hemolytic activity, and is not cytotoxic to monocytes. The sequence is that of Buforin-2 from Sphaenorhynchus lacteus (Orinoco lime treefrog).